The primary structure comprises 182 residues: MPRYLCDYCQVWLTHDSQSVRKAHNAGRAHIQNVQDYYTKVAQEEAQKQLEERASSGFLKKGNGSLDLPYAYAFPPKYNVFNLGCPPPPYIVSANTYMAPKGMNAMNAAAFVPMMPAVNLTNQVAFSAPQTTASSNTQLTQQQQSLPQTNEHQRARTHSNANNHFTKTHHQGQRSHQRFVRA.

A Matrin-type zinc finger spans residues 4 to 36; that stretch reads YLCDYCQVWLTHDSQSVRKAHNAGRAHIQNVQD. A disordered region spans residues 129 to 182; that stretch reads PQTTASSNTQLTQQQQSLPQTNEHQRARTHSNANNHFTKTHHQGQRSHQRFVRA. Positions 130-150 are enriched in low complexity; it reads QTTASSNTQLTQQQQSLPQTN. Residues 166–182 are compositionally biased toward basic residues; the sequence is TKTHHQGQRSHQRFVRA.

Belongs to the U1 small nuclear ribonucleoprotein C family. U1 snRNP is composed of the 7 core Sm proteins smb1, smd1, smd2, smd3, sme1, smf1 and smg1 (Sm proteins B, D1, D2, D3, E, F and G, respectively) that assemble in a heptameric protein ring on the Sm site of the small nuclear RNA to form the core snRNP, and at least 9 U1 snRNP-specific proteins usp101/U1-70K, usp102/U1-A, usp103/U1-C, usp106/LUC7, usp105/PRP39, usp104/PRP40, usp107/U1-H, usp108/U1-J and usp109/U1-L. usp103/U1-C interacts with U1 snRNA and the 5' splice-site region of the pre-mRNA.

Its subcellular location is the nucleus. Component of the spliceosomal U1 snRNP, which is essential for recognition of the pre-mRNA 5' splice-site and the subsequent assembly of the spliceosome. usp103/U1-C is directly involved in initial 5' splice-site recognition for both constitutive and regulated alternative splicing. The interaction with the 5' splice-site seems to precede base-pairing between the pre-mRNA and the U1 snRNA. Stimulates commitment or early (E) complex formation by stabilizing the base pairing of the 5' end of the U1 snRNA and the 5' splice-site region. The chain is U1 small nuclear ribonucleoprotein C (usp103) from Schizosaccharomyces pombe (strain 972 / ATCC 24843) (Fission yeast).